A 1053-amino-acid polypeptide reads, in one-letter code: Middle cell wall protein (1053 aa).

A signal peptide spans M1–A23. SLH domains lie at E26–Q89, F90–W153, and P154–D203.

In terms of assembly, the middle cell wall layer is composed of subunits of the middle cell wall protein. These proteins form a hexagonal array with a lattice constant of 14.5 nM in the middle cell wall layers.

It is found in the secreted. The protein resides in the cell wall. The protein localises to the S-layer. The middle wall protein binds to peptidoglycan and to the outer cell wall protein. This chain is Middle cell wall protein, found in Brevibacillus brevis (strain 47 / JCM 6285 / NBRC 100599).